A 222-amino-acid polypeptide reads, in one-letter code: Pyrrolidone-carboxylate peptidase (222 aa).

Residues Glu-80, Cys-146, and His-170 contribute to the active site.

This sequence belongs to the peptidase C15 family. Homotetramer.

The protein resides in the cytoplasm. The catalysed reaction is Release of an N-terminal pyroglutamyl group from a polypeptide, the second amino acid generally not being Pro.. Removes 5-oxoproline from various penultimate amino acid residues except L-proline. This Mycobacterium marinum (strain ATCC BAA-535 / M) protein is Pyrrolidone-carboxylate peptidase.